Reading from the N-terminus, the 284-residue chain is MYVVSTKQMLNNARRGGYAVPAFNIHNLETMQVVVETAASMHAPVIIAGTPGTFTHAGTENLMALVSAMAKQYHHPLAIHLDHHTKFDDIAQKVRSGVRSVMIDASHLPFAQNISRVKEVVDFCHRFDVSVEAELGQLGGQEDDVQVNEADAFYTNPVQAREFAEATGIDSLAVAIGTAHGMYASAPALDFSRLENIRQWVNLPLVLHGASGLSTKDIQQTIKLGICKINVATELKNAFSQALKNYLTEYPEATDPRDYLQSAKSAMRDVVSKVIADCGCEGRA.

D82 serves as the catalytic Proton donor. Residues H83 and H180 each contribute to the Zn(2+) site. A dihydroxyacetone phosphate-binding site is contributed by G181. Zn(2+) is bound at residue H208. Dihydroxyacetone phosphate contacts are provided by residues 209 to 211 (GAS) and 230 to 233 (NVAT).

It belongs to the class II fructose-bisphosphate aldolase family. TagBP aldolase GatY subfamily. Forms a complex with GatZ. Requires Zn(2+) as cofactor.

The catalysed reaction is D-tagatofuranose 1,6-bisphosphate = D-glyceraldehyde 3-phosphate + dihydroxyacetone phosphate. It participates in carbohydrate metabolism; D-tagatose 6-phosphate degradation; D-glyceraldehyde 3-phosphate and glycerone phosphate from D-tagatose 6-phosphate: step 2/2. Functionally, catalytic subunit of the tagatose-1,6-bisphosphate aldolase GatYZ, which catalyzes the reversible aldol condensation of dihydroxyacetone phosphate (DHAP or glycerone-phosphate) with glyceraldehyde 3-phosphate (G3P) to produce tagatose 1,6-bisphosphate (TBP). Requires GatZ subunit for full activity and stability. Is involved in the catabolism of galactitol. This is D-tagatose-1,6-bisphosphate aldolase subunit GatY from Escherichia coli O45:K1 (strain S88 / ExPEC).